Reading from the N-terminus, the 377-residue chain is Formate dehydrogenase, mitochondrial (377 aa).

Residues 1-29 (MAAMWRAAARQLVDRAVGSRAAHTSAGSK) constitute a mitochondrion transit peptide. 2 residues coordinate substrate: I121 and N145. Residues T146, D220, 255–259 (PLTEK), N281, D307, and 331–334 (HISG) contribute to the NAD(+) site.

This sequence belongs to the D-isomer specific 2-hydroxyacid dehydrogenase family. FDH subfamily. As to quaternary structure, homodimer.

It is found in the mitochondrion. The enzyme catalyses formate + NAD(+) = CO2 + NADH. Functionally, catalyzes the NAD(+)-dependent oxidation of formate to carbon dioxide. Involved in the cell stress response. In Hordeum vulgare (Barley), this protein is Formate dehydrogenase, mitochondrial.